A 309-amino-acid chain; its full sequence is Olfactory receptor 2AP1 (309 aa).

Residues 1-23 are Extracellular-facing; the sequence is MKNKTVLTEFILLGLTDVPELQV. An N-linked (GlcNAc...) asparagine glycan is attached at Asn3. A helical membrane pass occupies residues 24-47; that stretch reads AVFTFLFLAYLLSILGNLTILILT. At 48 to 55 the chain is on the cytoplasmic side; it reads LLDSHLQT. A helical membrane pass occupies residues 56 to 77; the sequence is PMYFFLRNFSFLEISFTNIFIP. The Extracellular portion of the chain corresponds to 78–98; that stretch reads RVLISITTGNKSISFAGCFTQ. Residue Asn87 is glycosylated (N-linked (GlcNAc...) asparagine). An intrachain disulfide couples Cys95 to Cys187. A helical transmembrane segment spans residues 99-118; it reads YFFAMFLGATEFYLLAAMSY. Residues 119-137 lie on the Cytoplasmic side of the membrane; it reads DRYVAICKPLHYTTIMSSR. The chain crosses the membrane as a helical span at residues 138-156; it reads ICIQLIFCSWLGGLMAIIP. The Extracellular segment spans residues 157 to 193; it reads TITLMSQQDFCASNRLNHYFCDYEPLLELSCSDTSLI. The helical transmembrane segment at 194–217 threads the bilayer; it reads EKVVFLVASVTLVVTLVLVILSYA. The Cytoplasmic portion of the chain corresponds to 218 to 234; it reads FIIKTILKLPSAQQRTK. A helical transmembrane segment spans residues 235 to 257; that stretch reads AFSTCSSHMIVISLSYGSCMFMY. Residues 258–270 lie on the Extracellular side of the membrane; it reads INPSAKEGDTFNK. Residues 271 to 290 traverse the membrane as a helical segment; that stretch reads GVALLITSVAPLLNPFIYTL. The Cytoplasmic segment spans residues 291–309; sequence RNQQVKQPFKDMVKKLLNL.

The protein belongs to the G-protein coupled receptor 1 family.

It is found in the cell membrane. Its function is as follows. Odorant receptor. In Homo sapiens (Human), this protein is Olfactory receptor 2AP1 (OR2AP1).